Reading from the N-terminus, the 571-residue chain is Putative phospholipase B-like 1 (571 aa).

The signal sequence occupies residues 1–18; the sequence is MNWIFIFLAAAVAIGCEA. Asn-62, Asn-149, Asn-442, and Asn-473 each carry an N-linked (GlcNAc...) asparagine glycan.

It belongs to the phospholipase B-like family.

It localises to the lysosome. Functionally, putative phospholipase. The sequence is that of Putative phospholipase B-like 1 from Caenorhabditis elegans.